Reading from the N-terminus, the 110-residue chain is Large ribosomal subunit protein uL22 (110 aa).

Belongs to the universal ribosomal protein uL22 family. As to quaternary structure, part of the 50S ribosomal subunit.

Its function is as follows. This protein binds specifically to 23S rRNA; its binding is stimulated by other ribosomal proteins, e.g. L4, L17, and L20. It is important during the early stages of 50S assembly. It makes multiple contacts with different domains of the 23S rRNA in the assembled 50S subunit and ribosome. The globular domain of the protein is located near the polypeptide exit tunnel on the outside of the subunit, while an extended beta-hairpin is found that lines the wall of the exit tunnel in the center of the 70S ribosome. The chain is Large ribosomal subunit protein uL22 from Haemophilus influenzae (strain 86-028NP).